A 252-amino-acid chain; its full sequence is Hydroxyacylglutathione hydrolase (252 aa).

7 residues coordinate Zn(2+): H54, H56, D58, H59, H111, D128, and H166.

Belongs to the metallo-beta-lactamase superfamily. Glyoxalase II family. In terms of assembly, monomer. Zn(2+) is required as a cofactor.

It catalyses the reaction an S-(2-hydroxyacyl)glutathione + H2O = a 2-hydroxy carboxylate + glutathione + H(+). It functions in the pathway secondary metabolite metabolism; methylglyoxal degradation; (R)-lactate from methylglyoxal: step 2/2. Its function is as follows. Thiolesterase that catalyzes the hydrolysis of S-D-lactoyl-glutathione to form glutathione and D-lactic acid. This is Hydroxyacylglutathione hydrolase from Vibrio parahaemolyticus serotype O3:K6 (strain RIMD 2210633).